Consider the following 374-residue polypeptide: Cyclin-D (374 aa).

The protein belongs to the cyclin family. Cyclin D subfamily.

The protein is Cyclin-D (CycD) of Ostreococcus tauri.